A 301-amino-acid polypeptide reads, in one-letter code: Protoheme IX farnesyltransferase 2 (301 aa).

A run of 9 helical transmembrane segments spans residues 29 to 49, 51 to 71, 101 to 121, 123 to 143, 150 to 170, 177 to 197, 223 to 243, 244 to 264, and 281 to 301; these read VVAL…PTAV, VQPL…AAAL, ALIF…VLVN, LTAW…TAYL, NIVI…TAVT, ALLL…ALAI, CILL…LVGM, CGPM…YKAW, and FSIY…YLWS.

Belongs to the UbiA prenyltransferase family. Protoheme IX farnesyltransferase subfamily.

The protein localises to the cell inner membrane. It catalyses the reaction heme b + (2E,6E)-farnesyl diphosphate + H2O = Fe(II)-heme o + diphosphate. Its pathway is porphyrin-containing compound metabolism; heme O biosynthesis; heme O from protoheme: step 1/1. In terms of biological role, converts heme B (protoheme IX) to heme O by substitution of the vinyl group on carbon 2 of heme B porphyrin ring with a hydroxyethyl farnesyl side group. The polypeptide is Protoheme IX farnesyltransferase 2 (Shewanella sp. (strain W3-18-1)).